Reading from the N-terminus, the 462-residue chain is Proline--tRNA ligase (462 aa).

It belongs to the class-II aminoacyl-tRNA synthetase family. ProS type 3 subfamily. Homodimer.

It is found in the cytoplasm. The enzyme catalyses tRNA(Pro) + L-proline + ATP = L-prolyl-tRNA(Pro) + AMP + diphosphate. Its function is as follows. Catalyzes the attachment of proline to tRNA(Pro) in a two-step reaction: proline is first activated by ATP to form Pro-AMP and then transferred to the acceptor end of tRNA(Pro). This is Proline--tRNA ligase from Thermoplasma volcanium (strain ATCC 51530 / DSM 4299 / JCM 9571 / NBRC 15438 / GSS1).